Consider the following 642-residue polypeptide: MRERAQEYDASQIQVLEGLEAVRKRPGMYIGSTSGEGLHHLVWEIVDNSIDEALAGFAKSIQVIIEPDDSITVIDDGRGIPVGIQAKTGRPAVETVFTVLHAGGKFGGGGYKVSGGLHGVGSSVVNALSTSLDVRVYKDGKVYYQEYRRGAVVDDLKVIEETDRHGTTVHFIPDPEIFTETTVYDFDKLATRVRELAFLNRGLHISIEDRREGQEDKKEYHYEGGIKSYVEHLNANKDVIFPEPIFIEGEQQDITVEVSMQYTDGYHSNILSFANNIHTYEGGTHESGFKTSLTRVINDYARKQKLMKENDEKLTGEDVREGLTAVVSIKHPDPQFEGQTKTKLGNSEVRTVTDRLFSEYFTKFLMENPTVGKQIVEKGMLASKARLAAKRAREVTRRKGALEISNLPGKLADCSSKDPEKCELFIVEGDSAGGSAKQGRSREFQAILPIRGKILNVEKASMDKILANEEIRSLFTAMGTGFGEDFDVSKARYHKLVIMTDADVDGAHIRTLLLTLFYRFMRPIVEAGYVYIAQPPLYGVKQGKNITYVQPGKHAEEELAKVLEELPASPKPSVQRYKGLGEMDDHQLWETTMDPEKRLMARVSVDDAIEADQIFEMLMGDRVEPRRAFIEENAHYVKNLDI.

The region spanning 422–536 (CELFIVEGDS…AGYVYIAQPP (115 aa)) is the Toprim domain. Mg(2+) contacts are provided by E428, D501, and D503.

It belongs to the type II topoisomerase family. Heterotetramer, composed of two GyrA and two GyrB chains. Within the heterotetramer, GyrA contains the active site tyrosine that forms a covalent intermediate with the DNA, while GyrB contributes the cofactor binding sites and catalyzes ATP hydrolysis. Requires Mg(2+) as cofactor. It depends on Mn(2+) as a cofactor. Ca(2+) is required as a cofactor.

It is found in the cytoplasm. The enzyme catalyses ATP-dependent breakage, passage and rejoining of double-stranded DNA.. Its activity is regulated as follows. Pyrrolopyrimidines inhibit both GyrB and its paralog in topoisomerase IV (parE). In terms of biological role, DNA gyrase negatively supercoils closed circular double-stranded DNA in an ATP-dependent manner and also catalyzes the interconversion of other topological isomers of double-stranded DNA rings, including catenanes and knotted rings. The polypeptide is DNA gyrase subunit B (Enterococcus faecalis (strain ATCC 700802 / V583)).